We begin with the raw amino-acid sequence, 99 residues long: MSAITRDEVAHLARLARLALPEDELDQLAAQLDVIISAVAKVQEVAKGDIPPTSHALPLTNVYRPDEVKPGLTPDQALAEAPAVEDGRFRVPQILGEEG.

Belongs to the GatC family. As to quaternary structure, heterotrimer of A, B and C subunits.

It catalyses the reaction L-glutamyl-tRNA(Gln) + L-glutamine + ATP + H2O = L-glutaminyl-tRNA(Gln) + L-glutamate + ADP + phosphate + H(+). It carries out the reaction L-aspartyl-tRNA(Asn) + L-glutamine + ATP + H2O = L-asparaginyl-tRNA(Asn) + L-glutamate + ADP + phosphate + 2 H(+). Its function is as follows. Allows the formation of correctly charged Asn-tRNA(Asn) or Gln-tRNA(Gln) through the transamidation of misacylated Asp-tRNA(Asn) or Glu-tRNA(Gln) in organisms which lack either or both of asparaginyl-tRNA or glutaminyl-tRNA synthetases. The reaction takes place in the presence of glutamine and ATP through an activated phospho-Asp-tRNA(Asn) or phospho-Glu-tRNA(Gln). This Thermobifida fusca (strain YX) protein is Aspartyl/glutamyl-tRNA(Asn/Gln) amidotransferase subunit C.